Consider the following 128-residue polypeptide: uncharacterized protein (128 aa).

This is an uncharacterized protein from Borreliella burgdorferi (strain ATCC 35210 / DSM 4680 / CIP 102532 / B31) (Borrelia burgdorferi).